Here is a 188-residue protein sequence, read N- to C-terminus: Elongation factor P (188 aa).

Belongs to the elongation factor P family.

The protein resides in the cytoplasm. The protein operates within protein biosynthesis; polypeptide chain elongation. Functionally, involved in peptide bond synthesis. Stimulates efficient translation and peptide-bond synthesis on native or reconstituted 70S ribosomes in vitro. Probably functions indirectly by altering the affinity of the ribosome for aminoacyl-tRNA, thus increasing their reactivity as acceptors for peptidyl transferase. The sequence is that of Elongation factor P from Wolbachia sp. subsp. Brugia malayi (strain TRS).